Here is a 251-residue protein sequence, read N- to C-terminus: MNEAVKTLDGWFCLHDFRSIDWAAWRELNPANQELMLNELSHFLSDMEITKNIGEGEHTIYSILGQKADLVFFTLRDSLEALNEVENRFNKLAIADYLLPTYSYISVVELSNYLASHMAGGEDPYQNKGVRARLYPALPPKKHICFYPMSKKRDGADNWYMLPMDERQKLIRDHGLIGRSYAGKVQQIIGGSIGFDDYEWGVTLFSDDALEFKRIVTEMRFDEASARYAEFGSFFIGNLLPSENLSKLFTM.

Fe-coproporphyrin III contacts are provided by residues Arg133, 147 to 151 (YPMSK), His174, Gln187, and Ser225. The active site involves Tyr147.

This sequence belongs to the ChdC family. Type 1 subfamily. Fe-coproporphyrin III is required as a cofactor.

It catalyses the reaction Fe-coproporphyrin III + 2 H2O2 + 2 H(+) = heme b + 2 CO2 + 4 H2O. The catalysed reaction is Fe-coproporphyrin III + H2O2 + H(+) = harderoheme III + CO2 + 2 H2O. It carries out the reaction harderoheme III + H2O2 + H(+) = heme b + CO2 + 2 H2O. It functions in the pathway porphyrin-containing compound metabolism; protoheme biosynthesis. Involved in coproporphyrin-dependent heme b biosynthesis. Catalyzes the decarboxylation of Fe-coproporphyrin III (coproheme) to heme b (protoheme IX), the last step of the pathway. The reaction occurs in a stepwise manner with a three-propionate intermediate. The protein is Coproheme decarboxylase of Listeria welshimeri serovar 6b (strain ATCC 35897 / DSM 20650 / CCUG 15529 / CIP 8149 / NCTC 11857 / SLCC 5334 / V8).